A 406-amino-acid chain; its full sequence is Gustatory receptor for sugar taste 64b (406 aa).

Topologically, residues M1–L47 are cytoplasmic. Residues Y48 to I68 form a helical membrane-spanning segment. Residues K69–T79 are Extracellular-facing. Residues L80–W100 traverse the membrane as a helical segment. Residues P101–R130 lie on the Cytoplasmic side of the membrane. The helical transmembrane segment at I131–G151 threads the bilayer. The Extracellular segment spans residues N152–Y183. The N-linked (GlcNAc...) asparagine glycan is linked to N167. A helical membrane pass occupies residues M184–A204. At Y205–A265 the chain is on the cytoplasmic side. The helical transmembrane segment at I266–F286 threads the bilayer. Residues N287–K290 are Extracellular-facing. Residues N291–V311 form a helical membrane-spanning segment. Topologically, residues R312–R370 are cytoplasmic. A helical transmembrane segment spans residues S371–I391. Residues N392–Y406 lie on the Extracellular side of the membrane.

This sequence belongs to the insect chemoreceptor superfamily. Gustatory receptor (GR) family. Gr5a subfamily. In terms of tissue distribution, expressed in Gr5a-expressing sugar-sensing cells.

The protein resides in the cell membrane. One of the few identified sugar gustatory receptors identified so far and which promotes the starvation-induced increase of feeding motivation. The sequence is that of Gustatory receptor for sugar taste 64b (Gr64b) from Drosophila melanogaster (Fruit fly).